The following is a 320-amino-acid chain: MVKKIGVLTSGGDAPGMNAAVRGVVRTALTEGLEVFGIHDGYLGLVEDRIEKLERHSVSDMINRGGTFLGSARFPEFKEVAVREKAIENLKKHDIDALIVIGGDGSYMGAKKLTEMGYPCIGLPGTIDNDIAGTDYTIGYLTALNTVIDAIDRLRDTSSSHQRISIVEVMGRHCGDLTLMSAIAGGCEYVITPETGLNKEALIQNIQDGIAKGKKHAIIAITELMTDVNQLAKEIEAETGRETRATVLGHIQRGGQPGAFDRILASRMGNYGVKLLIDGHGGRCVGIQNEQLVHHDIIDAIENMRRPEKLELYKVAEELF.

G12 serves as a coordination point for ATP. 22-26 contributes to the ADP binding site; sequence RGVVR. Residues 73 to 74 and 103 to 106 each bind ATP; these read RF and GDGS. A Mg(2+)-binding site is contributed by D104. 126 to 128 is a substrate binding site; it reads TID. The Proton acceptor role is filled by D128. R155 is an ADP binding site. Substrate is bound by residues R163 and 170–172; that span reads MGR. ADP contacts are provided by residues 186 to 188, K212, and 214 to 216; these read GCE and KKH. Substrate is bound by residues E223, R244, and 250–253; that span reads HIQR.

The protein belongs to the phosphofructokinase type A (PFKA) family. ATP-dependent PFK group I subfamily. Prokaryotic clade 'B1' sub-subfamily. Homotetramer. The cofactor is Mg(2+).

The protein localises to the cytoplasm. It catalyses the reaction beta-D-fructose 6-phosphate + ATP = beta-D-fructose 1,6-bisphosphate + ADP + H(+). It participates in carbohydrate degradation; glycolysis; D-glyceraldehyde 3-phosphate and glycerone phosphate from D-glucose: step 3/4. Its activity is regulated as follows. Allosterically activated by ADP and other diphosphonucleosides, and allosterically inhibited by phosphoenolpyruvate. In terms of biological role, catalyzes the phosphorylation of D-fructose 6-phosphate to fructose 1,6-bisphosphate by ATP, the first committing step of glycolysis. This is ATP-dependent 6-phosphofructokinase from Aliivibrio fischeri (strain ATCC 700601 / ES114) (Vibrio fischeri).